A 353-amino-acid polypeptide reads, in one-letter code: Photosystem II protein D1 (353 aa).

At T2 the chain carries N-acetylthreonine. T2 carries the post-translational modification Phosphothreonine. A run of 3 helical transmembrane segments spans residues 29-46 (YIGW…TATS), 118-133 (HFLL…EWEL), and 142-156 (WIAV…AATA). Chlorophyll a is bound at residue H118. Y126 lines the pheophytin a pocket. D170 and E189 together coordinate [CaMn4O5] cluster. Residues 197–218 (FHMLGVAGVFGGSLFSAMHGSL) traverse the membrane as a helical segment. H198 provides a ligand contact to chlorophyll a. A quinone-binding positions include H215 and 264-265 (SF). Residue H215 participates in Fe cation binding. H272 contributes to the Fe cation binding site. A helical membrane pass occupies residues 274 to 288 (FLAAWPVVGIWFTAL). [CaMn4O5] cluster is bound by residues H332, E333, D342, and A344. The propeptide occupies 345-353 (AVEAPSTNG).

It belongs to the reaction center PufL/M/PsbA/D family. As to quaternary structure, PSII is composed of 1 copy each of membrane proteins PsbA, PsbB, PsbC, PsbD, PsbE, PsbF, PsbH, PsbI, PsbJ, PsbK, PsbL, PsbM, PsbT, PsbX, PsbY, PsbZ, Psb30/Ycf12, at least 3 peripheral proteins of the oxygen-evolving complex and a large number of cofactors. It forms dimeric complexes. The D1/D2 heterodimer binds P680, chlorophylls that are the primary electron donor of PSII, and subsequent electron acceptors. It shares a non-heme iron and each subunit binds pheophytin, quinone, additional chlorophylls, carotenoids and lipids. D1 provides most of the ligands for the Mn4-Ca-O5 cluster of the oxygen-evolving complex (OEC). There is also a Cl(-1) ion associated with D1 and D2, which is required for oxygen evolution. The PSII complex binds additional chlorophylls, carotenoids and specific lipids. serves as cofactor. Post-translationally, tyr-161 forms a radical intermediate that is referred to as redox-active TyrZ, YZ or Y-Z. C-terminally processed by CTPA; processing is essential to allow assembly of the oxygen-evolving complex and thus photosynthetic growth.

The protein resides in the plastid. It localises to the chloroplast thylakoid membrane. It catalyses the reaction 2 a plastoquinone + 4 hnu + 2 H2O = 2 a plastoquinol + O2. Its function is as follows. Photosystem II (PSII) is a light-driven water:plastoquinone oxidoreductase that uses light energy to abstract electrons from H(2)O, generating O(2) and a proton gradient subsequently used for ATP formation. It consists of a core antenna complex that captures photons, and an electron transfer chain that converts photonic excitation into a charge separation. The D1/D2 (PsbA/PsbD) reaction center heterodimer binds P680, the primary electron donor of PSII as well as several subsequent electron acceptors. The chain is Photosystem II protein D1 from Drimys granadensis.